We begin with the raw amino-acid sequence, 159 residues long: Membrane protein FAM174B (159 aa).

A signal peptide spans 1–27; it reads MRAALPPARLLPLLLLLALLGAPAARA. The interval 28-73 is disordered; sequence SRAQSAAPPQPGAERQPRPPPGPGPGNATGTGSGEAAGGGGSSNSS. The Extracellular segment spans residues 28–90; the sequence is SRAQSAAPPQ…ISSLLRDLHT (63 aa). The segment covering 52–69 has biased composition (gly residues); it reads PGNATGTGSGEAAGGGGS. Asn54 is a glycosylation site (N-linked (GlcNAc...) asparagine). Residues 91 to 111 form a helical membrane-spanning segment; the sequence is LKAAVIVACAFTAFLIACLLL. The Cytoplasmic segment spans residues 112-159; the sequence is RVFRSGKRLKKTRKYDIITTPAERVEMAPLNEEDDEDEDSTVFDIKYR.

The protein belongs to the FAM174 family.

The protein localises to the cell membrane. It localises to the golgi apparatus. Its function is as follows. Essential for Golgi structural integrity. This is Membrane protein FAM174B (FAM174B) from Bos taurus (Bovine).